We begin with the raw amino-acid sequence, 520 residues long: Protein EARLY FLOWERING 5 (520 aa).

Short sequence motifs (nuclear localization signal) lie at residues 16–23 (YRKQIRKR), 52–59 (IRKLDMSK), and 71–78 (KKRQLEDT). The disordered stretch occupies residues 83 to 410 (VKKRKEYDEK…PPSSFQDGQA (328 aa)). Basic and acidic residues-rich tracts occupy residues 87 to 97 (KEYDEKKKEQG) and 114 to 126 (LTGE…EDSV). Over residues 148–168 (SSIGLAISSDGASSSSAALSS) the composition is skewed to low complexity. Pro residues-rich tracts occupy residues 198 to 207 (PLPPLPPLPP), 216 to 227 (SPFPPPPPGPPP), and 235 to 253 (PPLP…PPPG). Polar residues-rich tracts occupy residues 267-281 (SDFT…NITS), 300-312 (AESN…NANL), and 326-343 (QQHQ…TNFQ). Pro residues-rich tracts occupy residues 346-369 (VHPP…PPHP) and 378-403 (PRPP…PPPS).

As to expression, in seedlings, mostly expressed in the shoot apical meristem (SAM) and root tip.

The protein resides in the nucleus. In terms of biological role, involved in the regulation of flowering time in both long and short days. The sequence is that of Protein EARLY FLOWERING 5 from Arabidopsis thaliana (Mouse-ear cress).